We begin with the raw amino-acid sequence, 326 residues long: Beta-ketoacyl-[acyl-carrier-protein] synthase III (326 aa).

Residues Cys-112 and His-251 contribute to the active site. The interval 252–256 is ACP-binding; the sequence is QANSR. Asn-281 is a catalytic residue.

The protein belongs to the thiolase-like superfamily. FabH family. Homodimer.

The protein localises to the cytoplasm. It catalyses the reaction malonyl-[ACP] + acetyl-CoA + H(+) = 3-oxobutanoyl-[ACP] + CO2 + CoA. It functions in the pathway lipid metabolism; fatty acid biosynthesis. Functionally, catalyzes the condensation reaction of fatty acid synthesis by the addition to an acyl acceptor of two carbons from malonyl-ACP. Catalyzes the first condensation reaction which initiates fatty acid synthesis and may therefore play a role in governing the total rate of fatty acid production. Possesses both acetoacetyl-ACP synthase and acetyl transacylase activities. Its substrate specificity determines the biosynthesis of branched-chain and/or straight-chain of fatty acids. The polypeptide is Beta-ketoacyl-[acyl-carrier-protein] synthase III (Clostridium botulinum (strain Okra / Type B1)).